We begin with the raw amino-acid sequence, 256 residues long: Tryptophan synthase alpha chain (256 aa).

Active-site proton acceptor residues include Glu-51 and Asp-62.

This sequence belongs to the TrpA family. As to quaternary structure, tetramer of two alpha and two beta chains.

The catalysed reaction is (1S,2R)-1-C-(indol-3-yl)glycerol 3-phosphate + L-serine = D-glyceraldehyde 3-phosphate + L-tryptophan + H2O. Its pathway is amino-acid biosynthesis; L-tryptophan biosynthesis; L-tryptophan from chorismate: step 5/5. In terms of biological role, the alpha subunit is responsible for the aldol cleavage of indoleglycerol phosphate to indole and glyceraldehyde 3-phosphate. The sequence is that of Tryptophan synthase alpha chain from Solidesulfovibrio magneticus (strain ATCC 700980 / DSM 13731 / RS-1) (Desulfovibrio magneticus).